A 79-amino-acid chain; its full sequence is U-scoloptoxin(15)-Sm1a (79 aa).

A signal peptide spans 1-25 (MKMNVVVLSVVVLLLFIANIQQTEA).

Belongs to the scoloptoxin-15 family. In terms of processing, contains 2 disulfide bonds. In terms of tissue distribution, expressed by the venom gland.

The protein localises to the secreted. The protein is U-scoloptoxin(15)-Sm1a of Scolopendra morsitans (Tanzanian blue ringleg centipede).